The chain runs to 481 residues: NADH-quinone oxidoreductase subunit N (481 aa).

14 helical membrane-spanning segments follow: residues 11–31 (AYPE…DLFA), 37–57 (YLAF…TCGI), 74–94 (AMSD…LIYS), 103–123 (LLKG…MVMV), 128–148 (LITL…MVAL), 162–182 (FFVL…MLYG), 205–225 (IFII…SAVP), 238–258 (PTAV…GFVM), 272–292 (WQGM…IAAI), 300–320 (MLAY…IAAG), 328–348 (MFYV…IMLV), 371–391 (LAFM…MIGF), 405–425 (GYIW…FYYL), and 457–477 (LAII…LSAI).

This sequence belongs to the complex I subunit 2 family. In terms of assembly, NDH-1 is composed of 14 different subunits. Subunits NuoA, H, J, K, L, M, N constitute the membrane sector of the complex.

Its subcellular location is the cell inner membrane. The catalysed reaction is a quinone + NADH + 5 H(+)(in) = a quinol + NAD(+) + 4 H(+)(out). Functionally, NDH-1 shuttles electrons from NADH, via FMN and iron-sulfur (Fe-S) centers, to quinones in the respiratory chain. The immediate electron acceptor for the enzyme in this species is believed to be ubiquinone. Couples the redox reaction to proton translocation (for every two electrons transferred, four hydrogen ions are translocated across the cytoplasmic membrane), and thus conserves the redox energy in a proton gradient. The protein is NADH-quinone oxidoreductase subunit N of Nitrosomonas europaea (strain ATCC 19718 / CIP 103999 / KCTC 2705 / NBRC 14298).